The primary structure comprises 641 residues: YAP1-binding protein 2 (641 aa).

The protein belongs to the YBP1 family.

The protein resides in the cytoplasm. Its function is as follows. Involved in oxidative stress response and redox homeostasis. Required for hydrogen peroxide-induced activation of YAP1. Acts in a parallele pathway to YBP1. In Saccharomyces cerevisiae (strain ATCC 204508 / S288c) (Baker's yeast), this protein is YAP1-binding protein 2.